We begin with the raw amino-acid sequence, 94 residues long: Putative pterin-4-alpha-carbinolamine dehydratase (94 aa).

It belongs to the pterin-4-alpha-carbinolamine dehydratase family.

It catalyses the reaction (4aS,6R)-4a-hydroxy-L-erythro-5,6,7,8-tetrahydrobiopterin = (6R)-L-erythro-6,7-dihydrobiopterin + H2O. The sequence is that of Putative pterin-4-alpha-carbinolamine dehydratase from Mycobacterium leprae (strain Br4923).